The sequence spans 114 residues: Large ribosomal subunit protein bL19 (114 aa).

This sequence belongs to the bacterial ribosomal protein bL19 family.

Functionally, this protein is located at the 30S-50S ribosomal subunit interface and may play a role in the structure and function of the aminoacyl-tRNA binding site. The polypeptide is Large ribosomal subunit protein bL19 (Clavibacter michiganensis subsp. michiganensis (strain NCPPB 382)).